We begin with the raw amino-acid sequence, 288 residues long: Bifunctional protein FolD (288 aa).

Residues 163 to 165 (GRS), Ser188, and Ile229 contribute to the NADP(+) site.

This sequence belongs to the tetrahydrofolate dehydrogenase/cyclohydrolase family. Homodimer.

It catalyses the reaction (6R)-5,10-methylene-5,6,7,8-tetrahydrofolate + NADP(+) = (6R)-5,10-methenyltetrahydrofolate + NADPH. The enzyme catalyses (6R)-5,10-methenyltetrahydrofolate + H2O = (6R)-10-formyltetrahydrofolate + H(+). The protein operates within one-carbon metabolism; tetrahydrofolate interconversion. Its function is as follows. Catalyzes the oxidation of 5,10-methylenetetrahydrofolate to 5,10-methenyltetrahydrofolate and then the hydrolysis of 5,10-methenyltetrahydrofolate to 10-formyltetrahydrofolate. This Campylobacter curvus (strain 525.92) protein is Bifunctional protein FolD.